The sequence spans 566 residues: Heat shock protein 70 homolog C57A7.12 (566 aa).

39 to 46 (AFNRDGKT) serves as a coordination point for ATP. Phosphoserine occurs at positions 86 and 500.

This sequence belongs to the heat shock protein 70 family.

The sequence is that of Heat shock protein 70 homolog C57A7.12 from Schizosaccharomyces pombe (strain 972 / ATCC 24843) (Fission yeast).